Consider the following 423-residue polypeptide: Histidine--tRNA ligase (423 aa).

The protein belongs to the class-II aminoacyl-tRNA synthetase family. In terms of assembly, homodimer.

Its subcellular location is the cytoplasm. It carries out the reaction tRNA(His) + L-histidine + ATP = L-histidyl-tRNA(His) + AMP + diphosphate + H(+). The chain is Histidine--tRNA ligase from Actinobacillus pleuropneumoniae serotype 7 (strain AP76).